Consider the following 476-residue polypeptide: MIRKSATGVIVALAVIWGGGTWYTGTQIQPGVEKFIKDFNDAKKKGEHAYDMTLSYQNFDKGFFNSRFQMQMTFDNGAPDLNIKPGQKVVFDVDVEHGPLPITMLMHGNVIPALAAAKVNLVNNELTQPLFIAAKNKSPVEATLRFAFGGSFSTTLDVAPAEYGKFSFGEGQFTFNGDGSSLSNLDIEGKVEDIVLQLSPMNKVTAKSFTIDSLARLEEKKFPVGESESKFNQINIINHGEDVAQIDAFVAKTRLDRVKDKDYINVNLTYELDKLTKGNQQLGSGEWSLIAESIDPSAVRQFIIQYNIAMQKQLAAHPELANDEVALQEVNAALFKEYLPLLQKSEPTIKQPVRWKNALGELNANLDISIADPAKSSSSTNKDIKSLNFDVKLPLNVVTETAKQLNLSEGMDAEKAQKQADKQISGMMTLGQMFQLITIDNNTASLQLRYTPGKVVFNGQEMSEEEFMSRAGRFVH.

The signal sequence occupies residues 1–24 (MIRKSATGVIVALAVIWGGGTWYT).

To E.coli YdgA and H.influenzae HI_1236.

This is an uncharacterized protein from Escherichia coli (strain K12).